Reading from the N-terminus, the 280-residue chain is MSHADLEKTIEAAWEERAGISTATTGAVREAVDEALNLLDSGQARVAEKAGDSWQVNQWLKKAVLLSFRLNDMVPIEGGPGSSAWWDKVPSKFDNWGEAEFRAAGFRAVPGCFVRRGSYIAPGAVLMPSFINLGAHVGEGTMVDTWVTIGSCAQVGKNCHISGGAGIAGVLEPLQANPVIIEDNCFVGARAEVAEGVIIGEGSVLSMGVYIGASTRIIDRTTGETFYGRVPPYSVVVSGTTPGKPLPDGTPGPGLYCAVIVKRVDAGTRAKTGINELLRT.

The protein belongs to the transferase hexapeptide repeat family.

It is found in the cytoplasm. It catalyses the reaction (S)-2,3,4,5-tetrahydrodipicolinate + succinyl-CoA + H2O = (S)-2-succinylamino-6-oxoheptanedioate + CoA. It participates in amino-acid biosynthesis; L-lysine biosynthesis via DAP pathway; LL-2,6-diaminopimelate from (S)-tetrahydrodipicolinate (succinylase route): step 1/3. This chain is 2,3,4,5-tetrahydropyridine-2,6-dicarboxylate N-succinyltransferase, found in Methylorubrum extorquens (strain PA1) (Methylobacterium extorquens).